Reading from the N-terminus, the 2212-residue chain is MQDPLLGTLSELKDLVRKTIPDVIELAYQKDALLSQVHPRSVLIEGFKLLSLLVELESCKVNACHHNYEQKFIDVILSDGGILCPTLPKVVPDGYNLMGKTLILLETFVRVNPDDFEKKWKADMSKLISLKTDLGKIGVTLVPVVDGRSNYNTSFVSDWTTERLRWLLIEVLKGMKTTSELEIEEQEYHRLIHSLAKTNNQSLGFENLECLKRNMLSYDQLLDSSLLVGVKNDVKESKVMEELIRLKIWYKSEVYEKGLGKFVKTDKKVLLSQLITLGSHEENDSLDCAFCSSRILELCFKLSVKMHEDVLTRGLNLDGTKTLHSSVQSYLNVLSMCNKIKGSKIFNTRRNTLLFLDLIMLNFVVDEMVKDSTVIRNLKNAGLIVGQMILLVNDRVLDILTANKLIRQKLTTNEKWLSICSSVLKRYDLELWEKLCYLIRVPDFNELFQLAKELVSDRPMMRYSVHKAEERQCCHKAMENFTDDDFKIMLKALSHLSLGLINSMKTSFSSRLLINERDYSRYFGNVRLRECYIQRFPITNNIIGLLFYQKTGERSRCYSLYIAENGELTEIGSFYCDPKRYFVPIFSEAVITSMCEEMINWLNFDSELVRIVSTQLKTLMLLLLCSPSKRNQTFLQGLRYFIMAYVNQAHHIDLMSKLAVECKSSSEIQLQRLCVRLFVSILSGDNEIEYGFTRRFKFLLNISYLCHFITKETPDRLTDQIKCFEKFLEPKLKFNSVIVNPSLNGTLTESQEHQMISSIDRFFSKELLDQSDVKEPGVSRELLGYCVSLFNRGKLRVSGDLKVDPFRPTFTSTALDISSNKSVVVPKLDELGNIVDKYNKQLMVSSCVTSLVEMFKTKGRYNLDPDSIDFLVLKNLTNLVSANVPQEKSQEELSTLYEALTEDQISAFEQVRDEVQLALHKMKSSDAREERLQDPKRNEKNASKGKILESLWSPHQVNRAIKNETSIHEIKDFDPDILDSHLVEKLCHEVYNSSQKSLFFLDEPLKSVPLEMLLINLTTIAYEEEEFFECFKYLLIQGDFDQKLGTYEHKSRSRLGLSSEALKVQENARVSTRESNAEAIAKKLDRTFFTSAALRNLCFYSEDSPTEFTSVSTNTGNLKFGLSYKEQVGSNRELYVGDLNTKLMTRLVEDFSEVVTGSMRFSCLNSEKEFERAICDMKMAVNNGDFSLSMDHSKWGPHMSPALFFTFLANLNLTEPKSRTRLNLDPLLNILKWHLHKTVEVPFNVAQAYCIGKLKRSLGLMECQCSSLTEEFYHSYLQIQDEIPSHIMSVLDMGQGILHNLSDLYALITEQFLNYVIHKLFDIDVTSYTSSDDQISIMKLPLSTKENDEDFDWLEIICFHEYLSSKLNKFVSPKSVVGNFVAEFKSRFFVMGEETPLLTKFVAAALHNVKCKTPTQLAETIDTICDQCVANGVGVDIVSRISERVNRLISYSGYKETPFLTIVNQDVKDWTDGSRGYRLQRNIENSFGNQELLRLIRRGARKVFLEIKKGHVFEENLIGLIGRGGDEALRGFLLYAGFAENDIVEALRHKWLNPSTFGDLRLVLRTKIMSSKRILERESVPSLIKTLQSRMSKNFIKGAKKILAESINKSAFQSSVASGFIGFCKSMGSKCVRDGKGGFMYLKELYNNVNKCGCCICLEWPGVVYCQDSLAKISQFARSILWDYFTLVLTNACEIGEWVFSDVKSPSAPPILSNPNLFWAVKPKIQKHIEDRLSLNHILHSIKRNYPYLFEEHLAPFMSDLQFNQMMNPSHVKFLDVCIALDMMNENLGIIGHLLRGRNHFIYIVKQSECASAHIRQSDYVDHELGLSPQQVCYNFKVQFLFSSMIDPLIVSTSTLKTFFWFNEVLSIEEEDQIDLGELTDFTLFIKTGHLNRAMTADDITMGYVCSNLAEEIITLNSYGSFQEFRSNHPSKNDLSDILKTLTSESIKLTLDIQIVHMRNSTKYNISRKIVYTLKALCALPLEDCFTKDPVALVESLELFASGVNGGHLQLDGVTMVSVLPLLRGKKAVNLAQILMDNDLAATNDHNVMESVTLDFTKFHDELGDKFCYSLVGPEDQGNPIVLHNGMFMIDNQKLSYLKVEIFGDTIIKALGALDSPREIGSLLHGLWPYLKATKQIINFDQTDFEMIYDLHRVVLLESIAQFGDWVEFASFKVAFSKHYKDIVVADNLGNLRLKGVTCRLFRQQQSVEDIE.

Positions 30–288 (KDALLSQVHP…SHEENDSLDC (259 aa)) are endonuclease. Glu-55, Asp-93, and Glu-106 together coordinate Mn(2+). Lys-119 is a catalytic residue. The interval 922-942 (MKSSDAREERLQDPKRNEKNA) is disordered. A compositionally biased stretch (basic and acidic residues) spans 923 to 942 (KSSDAREERLQDPKRNEKNA). Residues 1175–1371 (CDMKMAVNNG…YLSSKLNKFV (197 aa)) form the RdRp catalytic domain. Asp-1333 lines the Mg(2+) pocket.

The protein belongs to the Bunyavirales RNA polymerase family. Homomultimer; the oligomeric structure is essential for the polymerase activity. Interacts with nucleoprotein N. Interacts with protein Z; this interaction inhibits viral transcription and replication, Z partially blocks the product exit tunnel for the releasing nascent RNA product. Mn(2+) is required as a cofactor. It depends on Mg(2+) as a cofactor.

The protein localises to the virion. Its subcellular location is the host cytoplasm. It catalyses the reaction RNA(n) + a ribonucleoside 5'-triphosphate = RNA(n+1) + diphosphate. RNA-dependent RNA polymerase, which is responsible for the replication and transcription of the viral RNA genome using antigenomic RNA as an intermediate. During transcription, synthesizes subgenomic RNAs and assures their capping by a cap-snatching mechanism, which involves the endonuclease activity cleaving the host capped pre-mRNAs. These short capped RNAs are then used as primers for viral transcription. The 3'-end of subgenomic mRNAs molecules are heterogeneous and not polyadenylated. The replicase function is to direct synthesis of antigenomic and genomic RNA which are encapsidated and non capped. As a consequence of the use of the same enzyme for both transcription and replication, these mechanisms need to be well coordinated. These processes may be regulated by proteins N and Z in a dose-dependent manner. Z protein inhibits the viral polymerase L und thus the viral transcription and RNA synthesis. In Sabia mammarenavirus (isolate Human/Brasil/SPH114202/1990) (SABV), this protein is RNA-directed RNA polymerase L.